The sequence spans 82 residues: Turripeptide IX-07 (82 aa).

A signal peptide spans 1-21 (MGFYMLLTVALLLTSLMNVEA). The propeptide occupies 22 to 39 (TPVNQAERSALEKSGLGN). 3 disulfide bridges follow: Cys-48/Cys-70, Cys-55/Cys-74, and Cys-60/Cys-81.

In terms of tissue distribution, expressed by the venom duct.

It is found in the secreted. The polypeptide is Turripeptide IX-07 (Gemmula speciosa (Splendid gem-turris)).